The chain runs to 87 residues: Large ribosomal subunit protein bL31B (87 aa).

The protein belongs to the bacterial ribosomal protein bL31 family. Type B subfamily. In terms of assembly, part of the 50S ribosomal subunit.

The chain is Large ribosomal subunit protein bL31B from Burkholderia multivorans (strain ATCC 17616 / 249).